A 260-amino-acid polypeptide reads, in one-letter code: Hydroxyethylthiazole kinase 1 (260 aa).

M39 is a binding site for substrate. ATP is bound by residues R115 and T160. Position 187 (G187) interacts with substrate.

Belongs to the Thz kinase family. The cofactor is Mg(2+).

It catalyses the reaction 5-(2-hydroxyethyl)-4-methylthiazole + ATP = 4-methyl-5-(2-phosphooxyethyl)-thiazole + ADP + H(+). It functions in the pathway cofactor biosynthesis; thiamine diphosphate biosynthesis; 4-methyl-5-(2-phosphoethyl)-thiazole from 5-(2-hydroxyethyl)-4-methylthiazole: step 1/1. Functionally, catalyzes the phosphorylation of the hydroxyl group of 4-methyl-5-beta-hydroxyethylthiazole (THZ). This chain is Hydroxyethylthiazole kinase 1, found in Streptococcus pneumoniae (strain ATCC 700669 / Spain 23F-1).